The chain runs to 394 residues: Mitogen-activated protein kinase 2 (394 aa).

Over residues 1–31 the composition is skewed to gly residues; the sequence is MRMEGGGGGGHGHHGGGGGGHGHHGGIGGGE. Residues 1–33 are disordered; sequence MRMEGGGGGGHGHHGGGGGGHGHHGGIGGGEAQ. One can recognise a Protein kinase domain in the interval 61-347; sequence VPPIRPVGRG…VDEALCHPYL (287 aa). ATP-binding positions include 67-75 and Lys90; that span reads VGRGACGII. The Proton acceptor role is filled by Asp187. Position 221 is a phosphotyrosine (Tyr221).

It belongs to the protein kinase superfamily. CMGC Ser/Thr protein kinase family. MAP kinase subfamily. The phosphorylation on Tyr-221 activates the enzyme. A conserved Thr, which must also be phosphorylated to activate the enzyme in closely related sequences, is replaced by Met-219 in this sequence.

It catalyses the reaction L-seryl-[protein] + ATP = O-phospho-L-seryl-[protein] + ADP + H(+). The catalysed reaction is L-threonyl-[protein] + ATP = O-phospho-L-threonyl-[protein] + ADP + H(+). The chain is Mitogen-activated protein kinase 2 (MPK2) from Oryza sativa subsp. japonica (Rice).